Here is a 463-residue protein sequence, read N- to C-terminus: MRIYNTLTQQKEAFKTLEPGKVRMYVCGMTVYDYCHLGHARVLVAFDVVTRYLRHRGYDVHYVRNITDIDDKILRRADENGEVYTDLTDRMIRAMHEDEAKLGVLSPNEEPRATAFIDDIIAMIQKLIAGGHAYAADNGDVYFAVESFPDYGKLSKKKLEDLVAGARVDVQEAKRSPADFALWKAAKPGEVSWQSPWGEGRPGWHIECSAMSTKCLGDTFDIHGGGPDLLFPHHENEIAQSECATGHTFVHTWMHAGAIRVNKEKMSKSLGNFFTIREILEKYPAEVVRYFLVSSHYRSQVDYSEDNLAEAGRTLTKLYHALRGIVPAKEADVAETDHDRRFAEVMDDDFNTAGAIAVLHAVANDINHYRREGDEEAAKRSAAVLVRLGAVLGLLQQNPEAFFQADTGSELTAEDIEAMIQARADARKAKDFAEADRIRDDLLEKGIILDDSREGTTWRRSQD.

Residue Cys27 coordinates Zn(2+). Residues 29-39 (MTVYDYCHLGH) carry the 'HIGH' region motif. Zn(2+) contacts are provided by Cys208, His233, and Glu237. The 'KMSKS' region motif lies at 265–269 (KMSKS). Lys268 is an ATP binding site.

It belongs to the class-I aminoacyl-tRNA synthetase family. Monomer. Requires Zn(2+) as cofactor.

The protein resides in the cytoplasm. The catalysed reaction is tRNA(Cys) + L-cysteine + ATP = L-cysteinyl-tRNA(Cys) + AMP + diphosphate. The protein is Cysteine--tRNA ligase of Marinobacter nauticus (strain ATCC 700491 / DSM 11845 / VT8) (Marinobacter aquaeolei).